The sequence spans 454 residues: Protein disulfide-isomerase TMX3 (454 aa).

Residues 1 to 24 (MAAWKSWAALRLCATVVLLDMVVC) form the signal peptide. Positions 25-128 (KGFVEDLDES…KDDIIEFAHR (104 aa)) constitute a Thioredoxin domain. Residues 25–375 (KGFVEDLDES…TIVSIFKSSP (351 aa)) lie on the Lumenal side of the membrane. Catalysis depends on nucleophile residues cysteine 53 and cysteine 56. Cysteine 53 and cysteine 56 are joined by a disulfide. Residues asparagine 258 and asparagine 313 are each glycosylated (N-linked (GlcNAc...) asparagine). The chain crosses the membrane as a helical span at residues 376–396 (LMGCFLFGLPLGVISIMCYGI). At 397–454 (YTADTDGGYIEERYEVSKSENENQEQIEESKEQQEPSSGGSVVPTVQEPKDVLEKKKD) the chain is on the cytoplasmic side. The disordered stretch occupies residues 412 to 454 (VSKSENENQEQIEESKEQQEPSSGGSVVPTVQEPKDVLEKKKD). Positions 444–454 (EPKDVLEKKKD) are enriched in basic and acidic residues. The Di-lysine motif motif lies at 451–454 (KKKD).

It belongs to the protein disulfide isomerase family.

The protein resides in the endoplasmic reticulum membrane. It catalyses the reaction Catalyzes the rearrangement of -S-S- bonds in proteins.. Its function is as follows. Probable disulfide isomerase, which participates in the folding of proteins containing disulfide bonds. May act as a dithiol oxidase. Acts as a regulator of endoplasmic reticulum-mitochondria contact sites via its ability to regulate redox signals. This Pongo abelii (Sumatran orangutan) protein is Protein disulfide-isomerase TMX3 (TMX3).